The primary structure comprises 415 residues: Probable RAD2-like endonuclease 369L (415 aa).

Positions 1 to 114 (MGIKNLTKFI…EDVKKKTLSL (114 aa)) are N-domain. Residues D34, E86, E198, E200, D219, D221, and D277 each contribute to the Mg(2+) site. The I-domain stretch occupies residues 163-297 (VKQRHRYDIR…VKSYELIKVQ (135 aa)).

This sequence belongs to the XPG/RAD2 endonuclease family. It depends on Mg(2+) as a cofactor.

Its subcellular location is the host nucleus. In terms of biological role, probable endonuclease. This is Probable RAD2-like endonuclease 369L from Acheta domesticus (House cricket).